A 957-amino-acid chain; its full sequence is Calsyntenin-3 (957 aa).

Positions 1-19 (MTLLLVSLLLASLLQISSG) are cleaved as a signal peptide. Residues 1-21 (MTLLLVSLLLASLLQISSGNK) are Cytoplasmic-facing. At 20–848 (NKANKHKPWI…SHRNSMVPSA (829 aa)) the chain is on the extracellular side. The segment at residues 22-42 (ANKHKPWIEAEYQGIVMENDN) is an intramembrane region (helical). Cadherin domains lie at 29-145 (IEAE…APVF) and 146-246 (VERL…KPSW). Residues 43 to 73 (TVLLNPPLFALDKDAPLRYAGEICGFRLHGS) are Cytoplasmic-facing. Positions 74–94 (GVPFKAVILDKATGEGLIRAK) form an intramembrane region, helical. At 95–139 (EPVDCEAQKEHTFTTQAYDCVDGPDGANTKKSHKATVHVRVNDVN) the chain is on the cytoplasmic side. An intramembrane region (helical) is located at residues 140 to 160 (EFAPVFVERLYRAAVTEGKLY). Over 161-248 (DRILRVEAID…KPTCKPSWQG (88 aa)) the chain is Cytoplasmic. The helical transmembrane segment at 249-269 (WNKRIEYAPGAGSLALFPGIR) threads the bilayer. Residues 270 to 357 (LETCDEPLWN…GTQAVQVPLG (88 aa)) are Lumenal-facing. Asn299, Asn327, Asn347, Asn508, and Asn741 each carry an N-linked (GlcNAc...) asparagine glycan. Residues 849-869 (ATLIIVVCVGFLVLMVILGLV) form a helical membrane-spanning segment. At 870–957 (RIHSLHRRVS…RIIESPPHRY (88 aa)) the chain is on the cytoplasmic side. The interval 916–957 (QQTGVAGVAGGQQEEEDSSDSEAADSPSSDERRIIESPPHRY) is disordered. Over residues 928-938 (QEEEDSSDSEA) the composition is skewed to acidic residues. Residues 944–957 (SDERRIIESPPHRY) are compositionally biased toward basic and acidic residues.

Belongs to the calsyntenin family. In terms of assembly, interacts (via cadherin domains) with both alpha and beta isoforms of neurexins (NRXN1, NRXN2 and NRXN3). Directly interacts with APBA2. Forms a tripartite complex with APBA2 and APP. Interacts with low affinity with KLC1. Interacts with SLC23A2/SVCT2. As to quaternary structure, interacts with CIDEA; inhibiting the lipid transferase activity of CIDEA. Interacts with CIDEC; inhibiting the lipid transferase activity of CIDEC. Proteolytically processed under normal cellular conditions. A primary zeta-cleavage generates a large extracellular (soluble) N-terminal domain (sAlc) and a short C-terminal transmembrane fragment (CTF1). A secondary cleavage catalyzed by gamma-secretase within the transmembrane domain releases the beta-Alc-beta chain in the extracellular milieu and produces an intracellular fragment (AlcICD). This processing is strongly suppressed in the tripartite complex formed with APBA2 and APP, which seems to prevent the association with gamma-secretase. Post-translationally, ubiquitinated: endoplasmic reticulum-localized protein is ubiquitinated and degraded by the endoplasmic reticulum-associated degradation (ERAD) pathway.

Its subcellular location is the postsynaptic cell membrane. The protein resides in the endoplasmic reticulum membrane. The protein localises to the golgi apparatus membrane. It is found in the cell projection. It localises to the dendrite. Its subcellular location is the lipid droplet. Its function is as follows. Postsynaptic adhesion molecule that binds to presynaptic neurexins to mediate both excitatory and inhibitory synapse formation. Promotes synapse development by acting as a cell adhesion molecule at the postsynaptic membrane, which associates with both neurexin-alpha and neurexin-beta proteins at the presynaptic membrane. Regulates the balance between excitatory and inhibitory synapses by inhibiting formation of excitatory parallel-fiber synapses and promoting formation of inhibitory synapses in the same neuron. May also be involved in ascorbate (vitamin C) uptake via its interaction with SLC23A2/SVCT2. Complex formation with APBA2 and APP, stabilizes APP metabolism and enhances APBA2-mediated suppression of beta-APP40 secretion, due to the retardation of intracellular APP maturation. Functionally, adipose-specific isoform that plays a key role in adaptive thermogenesis. Facilitates the efficient use of stored triglyceride by promoting multilocular morphology of thermogenic adipocytes: acts by inhibiting the activity of CIDEA and CIDEC on lipid droplets, thereby preventing lipid droplet fusion and facilitating lipid utilization. May also participate in adaptive thermogenesis by promoting sympathetic innervation of thermogenic adipose tissue: acts by driving secretion of neurotrophic factor S100B from brown adipocytes, stimulating neurite outgrowth from sympathetic neurons. The protein is Calsyntenin-3 of Rattus norvegicus (Rat).